Consider the following 574-residue polypeptide: Glycine--tRNA ligase (574 aa).

Residues Arg96 and Glu162 each contribute to the substrate site. Residues Arg194 to Glu196, Ile204 to Phe209, Glu327 to Cys328, and Gly450 to Arg453 contribute to the ATP site. A substrate-binding site is contributed by Phe209–Glu213. Glu446–Gly450 lines the substrate pocket.

The protein belongs to the class-II aminoacyl-tRNA synthetase family.

The protein localises to the cytoplasm. The enzyme catalyses tRNA(Gly) + glycine + ATP = glycyl-tRNA(Gly) + AMP + diphosphate. Catalyzes the attachment of glycine to tRNA(Gly). The sequence is that of Glycine--tRNA ligase from Methanococcus maripaludis (strain C7 / ATCC BAA-1331).